Consider the following 59-residue polypeptide: Sec-independent protein translocase protein TatA (59 aa).

The chain crosses the membrane as a helical span at residues 1 to 21 (MGRLGLTEILVIVGIVILLFG).

The protein belongs to the TatA/E family. Forms a complex with TatC.

Its subcellular location is the cell inner membrane. In terms of biological role, part of the twin-arginine translocation (Tat) system that transports large folded proteins containing a characteristic twin-arginine motif in their signal peptide across membranes. TatA could form the protein-conducting channel of the Tat system. The protein is Sec-independent protein translocase protein TatA of Flavobacterium johnsoniae (strain ATCC 17061 / DSM 2064 / JCM 8514 / BCRC 14874 / CCUG 350202 / NBRC 14942 / NCIMB 11054 / UW101) (Cytophaga johnsonae).